A 147-amino-acid chain; its full sequence is Globin (147 aa).

N-acetylserine is present on Ser2. The 146-residue stretch at 2–147 folds into the Globin domain; that stretch reads SLSAAEADLA…IIDALKAAGK (146 aa). A heme b-binding site is contributed by His96.

The protein belongs to the globin family. In terms of assembly, monomer.

The sequence is that of Globin from Aplysia limacina (Sea hare).